Consider the following 174-residue polypeptide: RNA pyrophosphohydrolase (174 aa).

In terms of domain architecture, Nudix hydrolase spans 6–149 (GYRPNVGIVI…KRDVYRRALK (144 aa)). The short motif at 38 to 59 (GGIDEGETPEQAMYRELYEEVG) is the Nudix box element.

Belongs to the Nudix hydrolase family. RppH subfamily. A divalent metal cation is required as a cofactor.

Accelerates the degradation of transcripts by removing pyrophosphate from the 5'-end of triphosphorylated RNA, leading to a more labile monophosphorylated state that can stimulate subsequent ribonuclease cleavage. This chain is RNA pyrophosphohydrolase, found in Photobacterium profundum (strain SS9).